The following is a 273-amino-acid chain: Urease accessory protein UreD (273 aa).

It belongs to the UreD family. UreD, UreF and UreG form a complex that acts as a GTP-hydrolysis-dependent molecular chaperone, activating the urease apoprotein by helping to assemble the nickel containing metallocenter of UreC. The UreE protein probably delivers the nickel.

It localises to the cytoplasm. In terms of biological role, required for maturation of urease via the functional incorporation of the urease nickel metallocenter. This chain is Urease accessory protein UreD, found in Bacillus cereus (strain ATCC 10987 / NRS 248).